The chain runs to 373 residues: MRKELLKKVKRVVVKIGSGVLTGENGGVDPGFLDGLAAQVAELSGQGTEVVIVSSGAVAAGRQALGLPDRPRTLPQKQAAAAVGQSRLMRAYEEAFSSYDLKVAQILLTRDDLANRRRFQNARGTLDTLLACGIIPVINENDTVVVDELKFGDNDNLSALVTNLVEAQLLLIMTDIDGLYTADPRTDPNATLIHQVGAVTRELERGAGGSGTSVGTGGMATKLAAAKKVVKSGVAAIIFAGRGERTLSRVMKGELLGTLFLPAGESLNRRKHWIAFTIKPAGSIVVDAGARDVLARHGRSLLPSGIAQVEGRFDRGACVRVLDPDGVEFARGITDYSSQEVEKIRGHQSSEIERILGFRYGDDVIHRDNLVLL.

Residue Lys15 coordinates ATP. Ser55, Asp142, and Asn154 together coordinate substrate. ATP contacts are provided by residues 174-175 and 216-222; these read TD and TGGMATK. The 79-residue stretch at 281-359 folds into the PUA domain; that stretch reads AGSIVVDAGA…SEIERILGFR (79 aa).

This sequence belongs to the glutamate 5-kinase family.

It localises to the cytoplasm. It catalyses the reaction L-glutamate + ATP = L-glutamyl 5-phosphate + ADP. It functions in the pathway amino-acid biosynthesis; L-proline biosynthesis; L-glutamate 5-semialdehyde from L-glutamate: step 1/2. Catalyzes the transfer of a phosphate group to glutamate to form L-glutamate 5-phosphate. The polypeptide is Glutamate 5-kinase (Geobacter sp. (strain M21)).